A 218-amino-acid polypeptide reads, in one-letter code: Cytochrome b6 (218 aa).

A helical transmembrane segment spans residues 35 to 55 (IFYCLGGITLVCFLVQFATGF). C38 is a binding site for heme c. Heme b-binding residues include H89 and H103. The next 3 helical transmembrane spans lie at 93–113 (ASMM…TGGF), 119–139 (LTWV…VTGY), and 189–209 (LHTF…FLMI). Heme b is bound by residues H190 and H205.

The protein belongs to the cytochrome b family. PetB subfamily. As to quaternary structure, the 4 large subunits of the cytochrome b6-f complex are cytochrome b6, subunit IV (17 kDa polypeptide, PetD), cytochrome f and the Rieske protein, while the 4 small subunits are PetG, PetL, PetM and PetN. The complex functions as a dimer. It depends on heme b as a cofactor. Heme c serves as cofactor.

The protein localises to the cellular thylakoid membrane. Component of the cytochrome b6-f complex, which mediates electron transfer between photosystem II (PSII) and photosystem I (PSI), cyclic electron flow around PSI, and state transitions. The protein is Cytochrome b6 of Prochlorococcus marinus (strain MIT 9303).